Consider the following 260-residue polypeptide: Cytochrome c oxidase subunit 2 (260 aa).

Residues 1–43 (MILRLLECRFFTIALCDAAEPWQLGFQDAATPMMQGIIDLHHD) are Mitochondrial intermembrane-facing. The helical transmembrane segment at 44-64 (IFFFLILILVFVLWMLVRALW) threads the bilayer. Topologically, residues 65–84 (HFNEQTNPIPQRIVHGTTIE) are mitochondrial matrix. The helical transmembrane segment at 85–105 (IIWTIFPSVILLFIAIPSFAL) threads the bilayer. Topologically, residues 106–260 (LYSMDGVLVD…VSNQLILQTN (155 aa)) are mitochondrial intermembrane. Residues His-189, Cys-224, Glu-226, Cys-228, His-232, and Met-235 each contribute to the Cu cation site. Glu-226 contributes to the Mg(2+) binding site.

Belongs to the cytochrome c oxidase subunit 2 family. As to quaternary structure, component of the cytochrome c oxidase (complex IV, CIV), a multisubunit enzyme composed of a catalytic core of 3 subunits and several supernumerary subunits. The complex exists as a monomer or a dimer and forms supercomplexes (SCs) in the inner mitochondrial membrane with ubiquinol-cytochrome c oxidoreductase (cytochrome b-c1 complex, complex III, CIII). Cu cation is required as a cofactor.

The protein resides in the mitochondrion inner membrane. The catalysed reaction is 4 Fe(II)-[cytochrome c] + O2 + 8 H(+)(in) = 4 Fe(III)-[cytochrome c] + 2 H2O + 4 H(+)(out). Functionally, component of the cytochrome c oxidase, the last enzyme in the mitochondrial electron transport chain which drives oxidative phosphorylation. The respiratory chain contains 3 multisubunit complexes succinate dehydrogenase (complex II, CII), ubiquinol-cytochrome c oxidoreductase (cytochrome b-c1 complex, complex III, CIII) and cytochrome c oxidase (complex IV, CIV), that cooperate to transfer electrons derived from NADH and succinate to molecular oxygen, creating an electrochemical gradient over the inner membrane that drives transmembrane transport and the ATP synthase. Cytochrome c oxidase is the component of the respiratory chain that catalyzes the reduction of oxygen to water. Electrons originating from reduced cytochrome c in the intermembrane space (IMS) are transferred via the dinuclear copper A center (CU(A)) of subunit 2 and heme A of subunit 1 to the active site in subunit 1, a binuclear center (BNC) formed by heme A3 and copper B (CU(B)). The BNC reduces molecular oxygen to 2 water molecules using 4 electrons from cytochrome c in the IMS and 4 protons from the mitochondrial matrix. The sequence is that of Cytochrome c oxidase subunit 2 (COX2) from Zea mays (Maize).